The following is a 322-amino-acid chain: Putative ankyrin repeat protein L897 (322 aa).

ANK repeat units lie at residues 88–117 (DNEYYTYFALSIGAMDVFKWLISHGFSYDM), 181–210 (NIIDVIEYAVQINNCDIIKILVKKFIFWAN), and 248–277 (NKNEALKYAIMMKNYDMIELLINYNIQTDH).

The chain is Putative ankyrin repeat protein L897 from Acanthamoeba polyphaga (Amoeba).